The primary structure comprises 319 residues: Acetyl-coenzyme A carboxylase carboxyl transferase subunit alpha (319 aa).

One can recognise a CoA carboxyltransferase C-terminal domain in the interval 35-296 (DLDKEIKQLE…KQRLIEQLNE (262 aa)).

The protein belongs to the AccA family. In terms of assembly, acetyl-CoA carboxylase is a heterohexamer composed of biotin carboxyl carrier protein (AccB), biotin carboxylase (AccC) and two subunits each of ACCase subunit alpha (AccA) and ACCase subunit beta (AccD).

The protein resides in the cytoplasm. It carries out the reaction N(6)-carboxybiotinyl-L-lysyl-[protein] + acetyl-CoA = N(6)-biotinyl-L-lysyl-[protein] + malonyl-CoA. Its pathway is lipid metabolism; malonyl-CoA biosynthesis; malonyl-CoA from acetyl-CoA: step 1/1. In terms of biological role, component of the acetyl coenzyme A carboxylase (ACC) complex. First, biotin carboxylase catalyzes the carboxylation of biotin on its carrier protein (BCCP) and then the CO(2) group is transferred by the carboxyltransferase to acetyl-CoA to form malonyl-CoA. This Aliivibrio salmonicida (strain LFI1238) (Vibrio salmonicida (strain LFI1238)) protein is Acetyl-coenzyme A carboxylase carboxyl transferase subunit alpha.